The following is a 39-amino-acid chain: Hementin (39 aa).

Requires a divalent metal cation as cofactor. As to expression, expressed mainly in the posterior salivary glands and, to a lesser extent, in the anterior salivary glands and secreted into the proboscis (at protein level).

It is found in the secreted. Its activity is regulated as follows. Inhibited by EDTA, cysteine, DTT and sodium phosphate. Partially inhibited by EGTA, citrate, Tris and glycine. Not inhibited by DFP, PMSF, iodoacetic acid and leupeptin. Requires sodium chloride concentrations higher than 0.15 M for activity. Functionally, metalloprotease with anticoagulant activity. Cleaves fibrinogen Aalpha (FGA), gamma (FGG) and Bbeta (FGB) chains after positions 'Asn-121', 'Lys-160' and 'Pro-102', respectively. Breaks down cross-linked and non-cross-linked fibrin clots. Prevents and reverts platelet aggregation induced by ADP and collagen. Prevents thrombin-induced platelet clotting. Does not affect plasma levels of coagulation factors prothrombin (F2), V (F5), VII (F7), VIII (F8), IX (F9), X (F10), XI (F11), XII (F12), plasma kallikrein (KLKB1) and kininogen-1 (KNG1). This chain is Hementin, found in Haementeria ghilianii (Amazon leech).